The primary structure comprises 467 residues: Glycogen synthase (467 aa).

Lysine 15 contributes to the ADP-alpha-D-glucose binding site.

Belongs to the glycosyltransferase 1 family. Bacterial/plant glycogen synthase subfamily.

The catalysed reaction is [(1-&gt;4)-alpha-D-glucosyl](n) + ADP-alpha-D-glucose = [(1-&gt;4)-alpha-D-glucosyl](n+1) + ADP + H(+). It functions in the pathway glycan biosynthesis; glycogen biosynthesis. Its function is as follows. Synthesizes alpha-1,4-glucan chains using ADP-glucose. The chain is Glycogen synthase from Desulfitobacterium hafniense (strain DSM 10664 / DCB-2).